The following is a 185-amino-acid chain: Orotate phosphoribosyltransferase (185 aa).

5-phospho-alpha-D-ribose 1-diphosphate is bound by residues Arg102, Lys103, Lys106, His108, and 128–136; that span reads DDVITTGGS. Orotate is bound by residues Thr132 and Arg160.

It belongs to the purine/pyrimidine phosphoribosyltransferase family. PyrE subfamily. Homodimer. Mg(2+) is required as a cofactor.

It carries out the reaction orotidine 5'-phosphate + diphosphate = orotate + 5-phospho-alpha-D-ribose 1-diphosphate. It participates in pyrimidine metabolism; UMP biosynthesis via de novo pathway; UMP from orotate: step 1/2. Its function is as follows. Catalyzes the transfer of a ribosyl phosphate group from 5-phosphoribose 1-diphosphate to orotate, leading to the formation of orotidine monophosphate (OMP). This is Orotate phosphoribosyltransferase from Leptospira biflexa serovar Patoc (strain Patoc 1 / Ames).